The sequence spans 86 residues: MKTLLLTLVVVTIVYLDLGYTTKCYNHQSTTPETTEICPDSGYFCYKSSWIDGREGRIERGCTFTCPELTPNGKYVYCCRRDKCNQ.

A signal peptide spans 1 to 21 (MKTLLLTLVVVTIVYLDLGYT). 4 disulfide bridges follow: C24–C45, C38–C62, C66–C78, and C79–C84.

The protein belongs to the three-finger toxin family. Short-chain subfamily. Orphan group VIII (haditoxin) sub-subfamily. Homodimer; non-covalently linked. As to expression, expressed by the venom gland.

It is found in the secreted. Antagonist of muscle (alpha-1-beta-1-delta-epsilon/CHRNA1-CHRNB1-CHRND-CHRNE) and neuronal (alpha-7/CHRNA7, alpha-3-beta-2/CHRNA3-CHRNB2, alpha-4-beta-2/CHRNA4-CHRNB2) nicotinic acetylcholine receptors (nAChR). The highest affinity is for human alpha-7/CHRNA7 nAChRs (IC(50)=180 nM), compared to human alpha-1-beta-1-delta-epsilon/CHRNA1-CHRNB1-CHRND-CHRNE nAChR (IC(50)= 550 nM), alpha-3-beta-2/CHRNA3-CHRNB2 nAChR (IC(50)=500 nM), and alpha-4-beta-2/CHRNA4-CHRNB2 nAChR (IC(50)=2.6 uM). In Ophiophagus hannah (King cobra), this protein is Haditoxin.